Consider the following 512-residue polypeptide: Maturase K (512 aa).

It belongs to the intron maturase 2 family. MatK subfamily.

The protein localises to the plastid. It localises to the chloroplast. Functionally, usually encoded in the trnK tRNA gene intron. Probably assists in splicing its own and other chloroplast group II introns. This is Maturase K from Lemna minor (Common duckweed).